Consider the following 251-residue polypeptide: Tropomyosin-2 (251 aa).

Positions 1–251 form a coiled coil; it reads MSGEEKLGKL…DTVADEPDDE (251 aa).

It belongs to the tropomyosin family. Homodimer. Striated muscle specific.

The polypeptide is Tropomyosin-2 (TPM2) (Podocoryna carnea (Hydrozoan)).